Reading from the N-terminus, the 407-residue chain is Eukaryotic initiation factor 4A-II (407 aa).

Residues 1-22 (MSGGSADYNREHGGPEGMDPDG) form a disordered region. A Q motif motif is present at residues 33 to 61 (DNFDDMNLKESLLRGIYAYGFEKPSAIQQ). Residues 64–235 (IIPCIKGYDV…KKFMRDPIRI (172 aa)) form the Helicase ATP-binding domain. 77-84 (AQSGTGKT) lines the ATP pocket. Threonine 159 carries the post-translational modification Phosphothreonine. Positions 183–186 (DEAD) match the DEAD box motif. The 162-residue stretch at 246–407 (GIKQFYINVE…EMPMNVADLI (162 aa)) folds into the Helicase C-terminal domain.

This sequence belongs to the DEAD box helicase family. eIF4A subfamily. EIF4F is a multi-subunit complex, the composition of which varies with external and internal environmental conditions. It is composed of at least EIF4A, EIF4E and EIF4G1/EIFFG3. Interacts with EIF4E. May interact with NOM1.

It carries out the reaction ATP + H2O = ADP + phosphate + H(+). Its function is as follows. ATP-dependent RNA helicase which is a subunit of the eIF4F complex involved in cap recognition and is required for mRNA binding to ribosome. In the current model of translation initiation, eIF4A unwinds RNA secondary structures in the 5'-UTR of mRNAs which is necessary to allow efficient binding of the small ribosomal subunit, and subsequent scanning for the initiator codon. The protein is Eukaryotic initiation factor 4A-II (EIF4A2) of Bos taurus (Bovine).